Reading from the N-terminus, the 185-residue chain is QPITESQRLFSIAVSRVQNLHLLAQRLFSDFESSLQTQEQRQLNKIFLQDFCNSDYIISPIDKHETQRSSVLKLLSISYRLVESWEFPSRSLSGAQRNQISEKLSDLKMGIQLLIRANQDGAEMFADSSALQLAPYGNYYQSLGGDESLRRNYELLACFKKDMHKVETYLMVAKCRLSPEANCTL.

Cysteines 52 and 158 form a disulfide. Position 167 (E167) interacts with Zn(2+). C175 and C183 form a disulfide bridge.

This sequence belongs to the somatotropin/prolactin family.

The protein resides in the secreted. In terms of biological role, growth hormone plays an important role in growth control and is involved in the regulation of several anabolic processes. Implicated as an osmoregulatory substance important for seawater adaptation. The polypeptide is Somatotropin (gh) (Katsuwonus pelamis (Skipjack tuna)).